Consider the following 199-residue polypeptide: UPF0329 protein ECU01_0120/ECU01_1490/ECU08_0050 (199 aa).

Belongs to the UPF0329 family.

The sequence is that of UPF0329 protein ECU01_0120/ECU01_1490/ECU08_0050 from Encephalitozoon cuniculi (strain GB-M1) (Microsporidian parasite).